The primary structure comprises 546 residues: Glucose-6-phosphate isomerase (546 aa).

The active-site Proton donor is E353. Catalysis depends on residues H384 and K512.

The protein belongs to the GPI family.

It is found in the cytoplasm. The enzyme catalyses alpha-D-glucose 6-phosphate = beta-D-fructose 6-phosphate. The protein operates within carbohydrate biosynthesis; gluconeogenesis. Its pathway is carbohydrate degradation; glycolysis; D-glyceraldehyde 3-phosphate and glycerone phosphate from D-glucose: step 2/4. In terms of biological role, catalyzes the reversible isomerization of glucose-6-phosphate to fructose-6-phosphate. This chain is Glucose-6-phosphate isomerase, found in Actinobacillus pleuropneumoniae serotype 5b (strain L20).